Here is a 143-residue protein sequence, read N- to C-terminus: uncharacterized protein (143 aa).

In terms of domain architecture, Rhodanese spans 50–143 (NKEDAVVVDL…GENLPLVRGK (94 aa)). At Lys91 the chain carries N6-acetyllysine.

This is an uncharacterized protein from Escherichia coli O6:H1 (strain CFT073 / ATCC 700928 / UPEC).